The sequence spans 317 residues: Pinoresinol reductase 2 (317 aa).

10 residues coordinate NADP(+): threonine 18, serine 20, leucine 21, arginine 41, lysine 50, serine 90, glycine 91, arginine 95, asparagine 98, and serine 121. Methionine 125 provides a ligand contact to (-)-pinoresinol. NADP(+) is bound by residues lysine 144 and phenylalanine 166. Lysine 144 acts as the Proton acceptor in catalysis. Glycine 178 serves as a coordination point for (-)-pinoresinol.

Belongs to the NmrA-type oxidoreductase family. Isoflavone reductase subfamily. In terms of assembly, forms homodimers. Expressed in roots. Detected in stems.

The enzyme catalyses (-)-lariciresinol + NADP(+) = (-)-pinoresinol + NADPH + H(+). Its function is as follows. Reductase involved in lignan biosynthesis. Unlike conventional pinoresinol reductases that can reduce both pinoresinol and lariciresinol, PRR2 shows a strict substrate selectivity for (-)-pinoresinol. No activity with (+)-pinoresinol or lariciresinol. Abstracts the 4R-hydride from the NADPH cofactor during catalysis. The chain is Pinoresinol reductase 2 from Arabidopsis thaliana (Mouse-ear cress).